Reading from the N-terminus, the 497-residue chain is Aldehyde dehydrogenase (497 aa).

Residue 242–247 (GSTLVG) coordinates NAD(+). Catalysis depends on Glu265, which acts as the Proton acceptor. Residue Cys299 is the Nucleophile of the active site.

Belongs to the aldehyde dehydrogenase family.

It catalyses the reaction an aldehyde + NAD(+) + H2O = a carboxylate + NADH + 2 H(+). It functions in the pathway alcohol metabolism; ethanol degradation; acetate from ethanol: step 2/2. In Aspergillus niger, this protein is Aldehyde dehydrogenase (aldA).